The chain runs to 384 residues: tRNA-specific 2-thiouridylase MnmA (384 aa).

ATP-binding positions include 18–25 and leucine 44; that span reads AMSGGVDS. Cysteine 112 functions as the Nucleophile in the catalytic mechanism. Cysteine 112 and cysteine 209 are joined by a disulfide. Glycine 136 serves as a coordination point for ATP. Residues 159-161 form an interaction with tRNA region; sequence RDQ. Residue cysteine 209 is the Cysteine persulfide intermediate of the active site.

This sequence belongs to the MnmA/TRMU family.

It is found in the cytoplasm. The enzyme catalyses S-sulfanyl-L-cysteinyl-[protein] + uridine(34) in tRNA + AH2 + ATP = 2-thiouridine(34) in tRNA + L-cysteinyl-[protein] + A + AMP + diphosphate + H(+). In terms of biological role, catalyzes the 2-thiolation of uridine at the wobble position (U34) of tRNA, leading to the formation of s(2)U34. The protein is tRNA-specific 2-thiouridylase MnmA of Methylobacterium radiotolerans (strain ATCC 27329 / DSM 1819 / JCM 2831 / NBRC 15690 / NCIMB 10815 / 0-1).